Here is a 335-residue protein sequence, read N- to C-terminus: Glycerol-3-phosphate dehydrogenase [NAD(P)+] (335 aa).

3 residues coordinate NADPH: phenylalanine 11, arginine 31, and lysine 107. The sn-glycerol 3-phosphate site is built by lysine 107 and glycine 135. An NADPH-binding site is contributed by alanine 139. Sn-glycerol 3-phosphate contacts are provided by lysine 190, aspartate 245, serine 255, arginine 256, and asparagine 257. Residue lysine 190 is the Proton acceptor of the active site. An NADPH-binding site is contributed by arginine 256. Leucine 280 and glutamate 282 together coordinate NADPH.

The protein belongs to the NAD-dependent glycerol-3-phosphate dehydrogenase family.

It localises to the cytoplasm. It catalyses the reaction sn-glycerol 3-phosphate + NAD(+) = dihydroxyacetone phosphate + NADH + H(+). It carries out the reaction sn-glycerol 3-phosphate + NADP(+) = dihydroxyacetone phosphate + NADPH + H(+). It functions in the pathway membrane lipid metabolism; glycerophospholipid metabolism. Catalyzes the reduction of the glycolytic intermediate dihydroxyacetone phosphate (DHAP) to sn-glycerol 3-phosphate (G3P), the key precursor for phospholipid synthesis. The chain is Glycerol-3-phosphate dehydrogenase [NAD(P)+] from Anaplasma marginale (strain St. Maries).